Here is a 350-residue protein sequence, read N- to C-terminus: Protein-glutamate methylesterase/protein-glutamine glutaminase (350 aa).

One can recognise a Response regulatory domain in the interval 5 to 122; sequence RVLCVDDSAL…REGMLAYSEL (118 aa). A 4-aspartylphosphate modification is found at Asp56. The CheB-type methylesterase domain occupies 153–345; sequence LLSSEKLIAI…QRMLAQISAG (193 aa). Active-site residues include Ser165, His191, and Asp287.

Belongs to the CheB family. In terms of processing, phosphorylated by CheA. Phosphorylation of the N-terminal regulatory domain activates the methylesterase activity.

The protein resides in the cytoplasm. It catalyses the reaction [protein]-L-glutamate 5-O-methyl ester + H2O = L-glutamyl-[protein] + methanol + H(+). The enzyme catalyses L-glutaminyl-[protein] + H2O = L-glutamyl-[protein] + NH4(+). In terms of biological role, involved in chemotaxis. Part of a chemotaxis signal transduction system that modulates chemotaxis in response to various stimuli. Catalyzes the demethylation of specific methylglutamate residues introduced into the chemoreceptors (methyl-accepting chemotaxis proteins or MCP) by CheR. Also mediates the irreversible deamidation of specific glutamine residues to glutamic acid. Does not interact with the C-terminal pentapeptide of the chemoreceptors. This Pectobacterium atrosepticum (strain SCRI 1043 / ATCC BAA-672) (Erwinia carotovora subsp. atroseptica) protein is Protein-glutamate methylesterase/protein-glutamine glutaminase.